We begin with the raw amino-acid sequence, 386 residues long: Succinate--CoA ligase [ADP-forming] subunit beta (386 aa).

Positions 9-244 (KEILRKYGVP…HDEEDPLETR (236 aa)) constitute an ATP-grasp domain. Residues K46, 53-55 (GRG), E99, C102, and E107 each bind ATP. Mg(2+)-binding residues include N199 and D213. Residues N264 and 321–323 (GIM) contribute to the substrate site.

Belongs to the succinate/malate CoA ligase beta subunit family. Heterotetramer of two alpha and two beta subunits. Requires Mg(2+) as cofactor.

It carries out the reaction succinate + ATP + CoA = succinyl-CoA + ADP + phosphate. The enzyme catalyses GTP + succinate + CoA = succinyl-CoA + GDP + phosphate. It functions in the pathway carbohydrate metabolism; tricarboxylic acid cycle; succinate from succinyl-CoA (ligase route): step 1/1. Its function is as follows. Succinyl-CoA synthetase functions in the citric acid cycle (TCA), coupling the hydrolysis of succinyl-CoA to the synthesis of either ATP or GTP and thus represents the only step of substrate-level phosphorylation in the TCA. The beta subunit provides nucleotide specificity of the enzyme and binds the substrate succinate, while the binding sites for coenzyme A and phosphate are found in the alpha subunit. This is Succinate--CoA ligase [ADP-forming] subunit beta from Rickettsia peacockii (strain Rustic).